The chain runs to 372 residues: tRNA-specific 2-thiouridylase MnmA (372 aa).

ATP contacts are provided by residues 13–20 (GMSGGVDS) and Met-39. The tract at residues 99-101 (NPD) is interaction with target base in tRNA. Cys-104 serves as the catalytic Nucleophile. Residues Cys-104 and Cys-200 are joined by a disulfide bond. Gly-128 contributes to the ATP binding site. The interval 150 to 152 (KDQ) is interaction with tRNA. The active-site Cysteine persulfide intermediate is the Cys-200. The interaction with tRNA stretch occupies residues 310 to 311 (RY).

It belongs to the MnmA/TRMU family.

Its subcellular location is the cytoplasm. It carries out the reaction S-sulfanyl-L-cysteinyl-[protein] + uridine(34) in tRNA + AH2 + ATP = 2-thiouridine(34) in tRNA + L-cysteinyl-[protein] + A + AMP + diphosphate + H(+). Its function is as follows. Catalyzes the 2-thiolation of uridine at the wobble position (U34) of tRNA, leading to the formation of s(2)U34. This chain is tRNA-specific 2-thiouridylase MnmA, found in Bacillus licheniformis (strain ATCC 14580 / DSM 13 / JCM 2505 / CCUG 7422 / NBRC 12200 / NCIMB 9375 / NCTC 10341 / NRRL NRS-1264 / Gibson 46).